The sequence spans 250 residues: uncharacterized protein (250 aa).

Residues 1–19 form the signal peptide; it reads MAKPRNAAESKAAKAQANA. 2 helical membrane passes run 51-71 and 73-93; these read IGAFLLIVGASVGVGVWAGGF and MFTMIPLGVLLGALVAFVIFG. The disordered stretch occupies residues 226-250; it reads AGVMPKGPLPTTAKMRSVQRTVRRK.

The protein localises to the cell membrane. This is an uncharacterized protein from Mycobacterium tuberculosis (strain CDC 1551 / Oshkosh).